A 515-amino-acid chain; its full sequence is Glucose-6-phosphate 1-dehydrogenase (515 aa).

N-acetylalanine is present on A2. A Phosphoserine modification is found at S8. A Phosphothreonine modification is found at T10. NADP(+) is bound by residues 38–45 (GASGDLAK) and R72. Position 89 is an N6-acetyllysine (K89). Residues Y147 and K171 each contribute to the NADP(+) site. Residues K171, 201–205 (HYLGK), E239, and D258 contribute to the D-glucose 6-phosphate site. K171 bears the N6-(2-hydroxyisobutyryl)lysine; alternate mark. N6-acetyllysine; alternate is present on K171. The active-site Proton acceptor is the H263. An NADP(+)-binding site is contributed by R357. Residues K360 and R365 each coordinate D-glucose 6-phosphate. Residues K366, R370, and R393 each contribute to the NADP(+) site. Residue Q395 coordinates D-glucose 6-phosphate. Residues 401-403 (YTK) and 421-423 (DLT) contribute to the NADP(+) site. K403 is subject to N6-acetyllysine. Position 432 is an N6-acetyllysine (K432). R487 serves as a coordination point for NADP(+). The residue at position 497 (K497) is an N6-acetyllysine. Y503 and W509 together coordinate NADP(+). At Y503 the chain carries Phosphotyrosine.

Belongs to the glucose-6-phosphate dehydrogenase family. Homotetramer; dimer of dimers. Interacts with SIRT2; the interaction is enhanced by H(2)O(2) treatment. Forms a ternary complex with ALDOB and TP53; this interaction is direct. ALDOB stabilizes the complex inhibiting G6PD activity and keeping oxidative pentose phosphate metabolism in check. Post-translationally, acetylated by ELP3 at Lys-403; acetylation inhibits its homodimerization and enzyme activity. Deacetylated by SIRT2 at Lys-403; deacetylation stimulates its enzyme activity.

Its subcellular location is the cytoplasm. The protein localises to the cytosol. It is found in the membrane. The enzyme catalyses D-glucose 6-phosphate + NADP(+) = 6-phospho-D-glucono-1,5-lactone + NADPH + H(+). The protein operates within carbohydrate degradation; pentose phosphate pathway; D-ribulose 5-phosphate from D-glucose 6-phosphate (oxidative stage): step 1/3. Cytosolic glucose-6-phosphate dehydrogenase that catalyzes the first and rate-limiting step of the oxidative branch within the pentose phosphate pathway/shunt, an alternative route to glycolysis for the dissimilation of carbohydrates and a major source of reducing power and metabolic intermediates for fatty acid and nucleic acid biosynthetic processes. In Osphranter robustus (Wallaroo), this protein is Glucose-6-phosphate 1-dehydrogenase (G6PD).